The following is a 223-amino-acid chain: Probable cell wall protein PGA61 (223 aa).

The signal sequence occupies residues 1-16 (MKSGLLLAVILPVAFA). N-linked (GlcNAc...) asparagine glycosylation occurs at N25. The segment at 83–134 (GAPSSSSTPTSSTETTSSTEAETTEAETTEQPSSSTSSNTESSKTTILETPS) is disordered. Low complexity-rich tracts occupy residues 84 to 103 (APSSSSTPTSSTETTSSTEA) and 111 to 128 (TEQPSSSTSSNTESSKTT). N-linked (GlcNAc...) asparagine glycosylation occurs at N188. N202 carries the GPI-anchor amidated asparagine lipid modification. Residues 203–223 (GAGRAAVIGSGSLLALLLNFI) constitute a propeptide, removed in mature form.

This sequence belongs to the IHD1 family. In terms of processing, the GPI-anchor is attached to the protein in the endoplasmic reticulum and serves to target the protein to the cell surface. There, the glucosamine-inositol phospholipid moiety is cleaved off and the GPI-modified mannoprotein is covalently attached via its lipidless GPI glycan remnant to the 1,6-beta-glucan of the outer cell wall layer.

It is found in the secreted. The protein localises to the cell wall. It localises to the membrane. Its function is as follows. Probable GPI-anchored cell wall protein that may be involved in cell wall organization, hyphal growth, as well as in virulence. The polypeptide is Probable cell wall protein PGA61 (PGA61) (Candida albicans (strain SC5314 / ATCC MYA-2876) (Yeast)).